The primary structure comprises 205 residues: Probable nicotinate-nucleotide adenylyltransferase (205 aa).

The protein belongs to the NadD family.

It catalyses the reaction nicotinate beta-D-ribonucleotide + ATP + H(+) = deamido-NAD(+) + diphosphate. It functions in the pathway cofactor biosynthesis; NAD(+) biosynthesis; deamido-NAD(+) from nicotinate D-ribonucleotide: step 1/1. Catalyzes the reversible adenylation of nicotinate mononucleotide (NaMN) to nicotinic acid adenine dinucleotide (NaAD). This chain is Probable nicotinate-nucleotide adenylyltransferase, found in Nocardioides sp. (strain ATCC BAA-499 / JS614).